The primary structure comprises 611 residues: Dual specificity protein phosphatase CDC14AB (611 aa).

An a region spans residues 23-178; sequence DLLGASEFIK…ALQHGFLNFE (156 aa). The tract at residues 179–192 is linker; sequence TFDVNEYEHYERVE. Residues 193–359 are b; sequence NGDLNWITPG…HGDSLRSKQR (167 aa). A Tyrosine-protein phosphatase domain is found at 194 to 352; the sequence is GDLNWITPGK…KQASLWAHGD (159 aa). The Phosphocysteine intermediate role is filled by C294. The segment at 408–611 is disordered; it reads KLRALKGRRQ…PSLQSEYVQY (204 aa). Residues 456–490 are compositionally biased toward low complexity; that stretch reads SPLKSSKVPASSSSSSSSSSVSASAKRIGRSSSSS. Residues 491–511 show a composition bias toward polar residues; it reads TNLKSTRLASSLGNLYEPNTE. A compositionally biased stretch (low complexity) spans 512 to 553; it reads SISSGKPPSPSSFTPHPVRTTYNYHYEVNNNNNQYSTTSSPS. Polar residues-rich tracts occupy residues 554 to 569 and 591 to 611; these read KSLGYNLNHSGPSGAS and GLSTRHLSRSIPSLQSEYVQY.

It belongs to the protein-tyrosine phosphatase family. Non-receptor class CDC14 subfamily.

The protein resides in the nucleus. Its subcellular location is the cytoplasm. It localises to the cytoskeleton. The protein localises to the microtubule organizing center. It is found in the centrosome. The protein resides in the spindle pole. Its subcellular location is the spindle. It localises to the cell projection. The protein localises to the kinocilium. It catalyses the reaction O-phospho-L-tyrosyl-[protein] + H2O = L-tyrosyl-[protein] + phosphate. The catalysed reaction is O-phospho-L-seryl-[protein] + H2O = L-seryl-[protein] + phosphate. The enzyme catalyses O-phospho-L-threonyl-[protein] + H2O = L-threonyl-[protein] + phosphate. Its function is as follows. Dual-specificity phosphatase. Required for centrosome separation and productive cytokinesis during cell division. Dephosphorylates SIRT2 around early anaphase. May dephosphorylate the APC subunit FZR1/CDH1, thereby promoting APC-FZR1 dependent degradation of mitotic cyclins and subsequent exit from mitosis. The polypeptide is Dual specificity protein phosphatase CDC14AB (cdc14ab) (Danio rerio (Zebrafish)).